Reading from the N-terminus, the 108-residue chain is Nucleoid-associated protein Lcho_1975 (108 aa).

This sequence belongs to the YbaB/EbfC family. As to quaternary structure, homodimer.

It localises to the cytoplasm. Its subcellular location is the nucleoid. Binds to DNA and alters its conformation. May be involved in regulation of gene expression, nucleoid organization and DNA protection. In Leptothrix cholodnii (strain ATCC 51168 / LMG 8142 / SP-6) (Leptothrix discophora (strain SP-6)), this protein is Nucleoid-associated protein Lcho_1975.